The sequence spans 467 residues: Cytochrome c-552 (467 aa).

The signal sequence occupies residues 1-27 (MMKKMTGKSFALSALVAASFMAAGAMA). Residue histidine 87 coordinates heme c. Cysteine 115, cysteine 118, and lysine 119 together coordinate heme. Residues cysteine 153, cysteine 156, histidine 157, cysteine 195, cysteine 198, and histidine 199 each contribute to the heme c site. Ca(2+)-binding residues include glutamate 201, tyrosine 202, lysine 250, and glutamine 252. Position 202 (tyrosine 202) interacts with substrate. Histidine 253 contributes to the substrate binding site. The heme c site is built by histidine 264, cysteine 271, cysteine 274, histidine 275, histidine 290, cysteine 303, cysteine 306, histidine 307, and histidine 382.

Belongs to the cytochrome c-552 family. The cofactor is Ca(2+). Heme c serves as cofactor.

It is found in the periplasm. It catalyses the reaction 6 Fe(III)-[cytochrome c] + NH4(+) + 2 H2O = 6 Fe(II)-[cytochrome c] + nitrite + 8 H(+). Its pathway is nitrogen metabolism; nitrate reduction (assimilation). In terms of biological role, catalyzes the reduction of nitrite to ammonia, consuming six electrons in the process. The chain is Cytochrome c-552 from Shewanella sp. (strain MR-4).